The following is a 72-amino-acid chain: Antitoxin VapB11 (72 aa).

In terms of biological role, antitoxin component of a type II toxin-antitoxin (TA) system. The chain is Antitoxin VapB11 (vapB11) from Mycobacterium tuberculosis (strain CDC 1551 / Oshkosh).